Consider the following 320-residue polypeptide: Zinc finger Ran-binding domain-containing protein 2 (320 aa).

Serine 9 carries the post-translational modification Phosphoserine. The RanBP2-type 1 zinc-finger motif lies at serine 9–threonine 40. N6-acetyllysine is present on residues lysine 18, lysine 54, and lysine 92. A RanBP2-type 2 zinc finger spans residues serine 65–alanine 94. The segment at arginine 117–proline 320 is disordered. Phosphoserine is present on residues serine 120, serine 153, serine 181, serine 188, and serine 193. Over residues aspartate 150–aspartate 163 the composition is skewed to acidic residues. Positions lysine 151–proline 320 are required for nuclear targeting. Residues lysine 196–histidine 210 are compositionally biased toward basic residues. 2 stretches are compositionally biased toward low complexity: residues serine 211–arginine 224 and arginine 232–arginine 242. The span at serine 251 to serine 273 shows a compositional bias: basic residues.

Belongs to the ZRANB2 family. Interacts with the C-terminal half of SNRP70/U1-70K, the Arg/Ser-rich domain of AKAP17A as well as with U2AF1 and CLK1. In terms of processing, phosphorylated on Ser-310 upon DNA damage, probably by ATM or ATR.

It is found in the nucleus. In terms of biological role, splice factor required for alternative splicing of TRA2B/SFRS10 transcripts. Binds to ssRNA containing the consensus sequence 5'-AGGUAA-3'. May interfere with constitutive 5'-splice site selection. This Pongo abelii (Sumatran orangutan) protein is Zinc finger Ran-binding domain-containing protein 2.